We begin with the raw amino-acid sequence, 448 residues long: Probable glycine dehydrogenase (decarboxylating) subunit 1 (448 aa).

It belongs to the GcvP family. N-terminal subunit subfamily. As to quaternary structure, the glycine cleavage system is composed of four proteins: P, T, L and H. In this organism, the P 'protein' is a heterodimer of two subunits.

The catalysed reaction is N(6)-[(R)-lipoyl]-L-lysyl-[glycine-cleavage complex H protein] + glycine + H(+) = N(6)-[(R)-S(8)-aminomethyldihydrolipoyl]-L-lysyl-[glycine-cleavage complex H protein] + CO2. Functionally, the glycine cleavage system catalyzes the degradation of glycine. The P protein binds the alpha-amino group of glycine through its pyridoxal phosphate cofactor; CO(2) is released and the remaining methylamine moiety is then transferred to the lipoamide cofactor of the H protein. The chain is Probable glycine dehydrogenase (decarboxylating) subunit 1 from Rhodospirillum rubrum (strain ATCC 11170 / ATH 1.1.1 / DSM 467 / LMG 4362 / NCIMB 8255 / S1).